The primary structure comprises 438 residues: 23S rRNA (uracil(1939)-C(5))-methyltransferase RlmD (438 aa).

The 59-residue stretch at 11-69 (LQPESKHQQVLVEKLDHQGAGIAYLNKKPLFIDGTLPGEEVVTQLTESKSKFARGKLIK) folds into the TRAM domain. [4Fe-4S] cluster is bound by residues Cys82, Cys88, Cys91, and Cys169. Residues Gln272, Phe301, Asn306, Glu322, Asn349, and Asp370 each contribute to the S-adenosyl-L-methionine site. Cys396 functions as the Nucleophile in the catalytic mechanism.

It belongs to the class I-like SAM-binding methyltransferase superfamily. RNA M5U methyltransferase family. RlmD subfamily.

The catalysed reaction is uridine(1939) in 23S rRNA + S-adenosyl-L-methionine = 5-methyluridine(1939) in 23S rRNA + S-adenosyl-L-homocysteine + H(+). In terms of biological role, catalyzes the formation of 5-methyl-uridine at position 1939 (m5U1939) in 23S rRNA. This chain is 23S rRNA (uracil(1939)-C(5))-methyltransferase RlmD, found in Vibrio vulnificus (strain CMCP6).